We begin with the raw amino-acid sequence, 344 residues long: Heat-inducible transcription repressor HrcA (344 aa).

It belongs to the HrcA family.

Negative regulator of class I heat shock genes (grpE-dnaK-dnaJ and groELS operons). Prevents heat-shock induction of these operons. The chain is Heat-inducible transcription repressor HrcA from Anoxybacillus flavithermus (strain DSM 21510 / WK1).